A 298-amino-acid polypeptide reads, in one-letter code: Nucleotide-binding protein Dred_3054 (298 aa).

ATP is bound at residue 20–27 (GMSGAGKT). 71–74 (DIRG) is a binding site for GTP.

The protein belongs to the RapZ-like family.

Functionally, displays ATPase and GTPase activities. In Desulforamulus reducens (strain ATCC BAA-1160 / DSM 100696 / MI-1) (Desulfotomaculum reducens), this protein is Nucleotide-binding protein Dred_3054.